Reading from the N-terminus, the 708-residue chain is MEANHQRNDLGLVALTMLAQYHNISLNPEEIKHKFDLDGKGLSLTSWLLAAKSLALKAKHIKKEISRLHLVNLPALVWQDNGKHFLLVKVDTDNNRYLTYNLEQDAPQILSQDEFEACYQGQLILVTSRASVVGQLAKFDFTWFIPAVIKYRKIFLETLIVSIFLQIFALITPLFFQVVMDKVLVHRGFSTLNIITVALAIVIIFEIVLSGLRTYVFSHSTSRIDVELGAKLFRHLLSLPISYFENRRVGDTVARVRELDQIRNFLTGQALTSVLDLLFSFIFFAVMWYYSPKLTLVILGSLPCYILWSIFISPILRRRLDDKFARSADNQAFLVESVTAINMIKAMAVAPQMTDTWDKQLASYVSSSFRVTVLATIGQQGVQLIQKTVMVINLWLGAHLVISGDLSIGQLIAFNMLSGQVIAPVIRLAQLWQDFQQVGISVTRLGDVLNSPTEQYQGKLSLPEIKGYISFKNIRFRYKPDAPTILNNVNLEIRQGEVIGIVGRSGSGKSTLTKLLQRFYIPENGQVLIDGHDLALADPNWLRRQIGVVLQDNVLLNRSIRENIALSDPGMPMERVIYAAKLAGAHDFISELREGYNTIVGEQGAGLSGGQRQRIAIARALVNNPKILIFDEATSALDYESEHIIMQNMQKICQGRTVILIAHRLSTVKNADRIIVMEKGEIVEQGKHHELLQNSNGLYSYLHQLQLN.

The region spanning 1–126 (MEANHQRNDL…ACYQGQLILV (126 aa)) is the Peptidase C39 domain. The 283-residue stretch at 155-437 (FLETLIVSIF…LAQLWQDFQQ (283 aa)) folds into the ABC transmembrane type-1 domain. The next 5 membrane-spanning stretches (helical) occupy residues 159–179 (LIVS…FQVV), 192–212 (LNII…LSGL), 270–290 (ALTS…MWYY), 296–316 (LVIL…SPIL), and 389–409 (VMVI…LSIG). The ABC transporter domain maps to 469 to 704 (ISFKNIRFRY…SNGLYSYLHQ (236 aa)). 503 to 510 (GRSGSGKS) contacts ATP.

Belongs to the ABC transporter superfamily. Protein-1 exporter (TC 3.A.1.109) family. As to quaternary structure, homodimer.

It is found in the cell inner membrane. It catalyses the reaction ATP + H2O + proteinSide 1 = ADP + phosphate + proteinSide 2.. Part of the ABC transporter complex LktBD involved in leukotoxin export. Transmembrane domains (TMD) form a pore in the inner membrane and the ATP-binding domain (NBD) is responsible for energy generation. The polypeptide is Leukotoxin translocation ATP-binding protein LktB (lktB) (Mannheimia haemolytica (Pasteurella haemolytica)).